The following is a 246-amino-acid chain: Bis(5'-nucleosyl)-tetraphosphatase PrpE [asymmetrical] (246 aa).

This sequence belongs to the PrpE family. Requires Ni(2+) as cofactor.

It carries out the reaction P(1),P(4)-bis(5'-guanosyl) tetraphosphate + H2O = GMP + GTP + 2 H(+). Functionally, asymmetrically hydrolyzes Ap4p to yield AMP and ATP. The polypeptide is Bis(5'-nucleosyl)-tetraphosphatase PrpE [asymmetrical] (Bacillus anthracis (strain A0248)).